We begin with the raw amino-acid sequence, 244 residues long: Type I iodothyronine deiodinase (244 aa).

Residues 1-12 (MGLSQLGLWLRR) lie on the Extracellular side of the membrane. The chain crosses the membrane as a helical; Signal-anchor for type III membrane protein span at residues 13-33 (LWVLFQVALQVAVGKVFLILF). Residues 34–244 (PSRVKQHIVA…VRAVLEKLHS (211 aa)) lie on the Cytoplasmic side of the membrane. The active site involves Sec121. Sec121 is a non-standard amino acid (selenocysteine).

It belongs to the iodothyronine deiodinase family. In terms of assembly, predominantly monomer. Can form homodimers but homodimerization is not essential for enzyme activity.

The protein resides in the cell membrane. Its subcellular location is the endoplasmic reticulum membrane. The protein localises to the basolateral cell membrane. The catalysed reaction is 3,3',5-triiodo-L-thyronine + iodide + A + H(+) = L-thyroxine + AH2. It carries out the reaction 3,3',5'-triiodo-L-thyronine + iodide + A + H(+) = L-thyroxine + AH2. It catalyses the reaction 3,3'-diiodo-L-thyronine + iodide + A + H(+) = 3,3',5'-triiodo-L-thyronine + AH2. The enzyme catalyses 3,3'-diiodo-L-thyronine + iodide + A + H(+) = 3,3',5-triiodo-L-thyronine + AH2. The catalysed reaction is 3'-iodo-L-thyronine + iodide + A + H(+) = 3',5'-diiodo-L-thyronine + AH2. It carries out the reaction 3-iodo-L-thyronine + iodide + A + H(+) = 3,5-diiodo-L-thyronine + AH2. It catalyses the reaction 3-iodo-L-thyronine + iodide + A + H(+) = 3,3'-diiodo-L-thyronine + AH2. The enzyme catalyses 3,3'-diiodothyronamine + iodide + A + H(+) = 3,3',5'-triiodothyronamine + AH2. The catalysed reaction is 3'-iodothyronamine + iodide + A + H(+) = 3',5'-diiodothyronamine + AH2. It carries out the reaction 3-iodothyronamine + iodide + A + H(+) = 3,3'-diiodothyronamine + AH2. It catalyses the reaction 3,3'-diiodothyronamine + iodide + A + H(+) = 3,3',5-triiodothyronamine + AH2. The enzyme catalyses 3-iodothyronamine + iodide + A + H(+) = 3,5-diiodothyronamine + AH2. The catalysed reaction is 3,3'-diiodo-L-thyronine sulfate + iodide + A + H(+) = 3,3',5'-triiodo-L-thyronine sulfate + AH2. It carries out the reaction 3,3',5'-triiodo-L-thyronine sulfate + iodide + A + H(+) = L-thyroxine sulfate + AH2. It catalyses the reaction 3,3'-diiodo-L-thyronine sulfate + iodide + A + H(+) = 3,3',5-triiodo-L-thyronine sulfate + AH2. Its function is as follows. Plays a crucial role in the metabolism of thyroid hormones (TH) and has specific roles in TH activation and inactivation by deiodination. Catalyzes the deiodination of L-thyroxine (T4) to 3,5,3'-triiodothyronine (T3) and 3',5'-diiodothyronine (3',5'-T2) to 3'-monoiodothyronine (3'-T1) via outer-ring deiodination (ORD). Catalyzes the deiodination of T4 to 3,3',5'-triiodothyronine (rT3), T3 to 3,3'-diiodothyronine (3,3'-T2), 3,5-diiodothyronine (3,5-T2) to 3-monoiodothyronine (3-T1) and 3,3'-T2 to 3-T1 via inner-ring deiodination (IRD). Catalyzes the deiodination of rT3 to 3,3'-T2 via ORD. Catalyzes the phenolic ring deiodinations of 3,3',5'-triiodothyronamine, 3',5'-diiodothyronamine and 3,3'-diiodothyronamine as well as tyrosyl ring deiodinations of 3,5,3'-triiodothyronamine and 3,5-diiodothyronamine. Catalyzes the deiodination of L-thyroxine sulfate and 3,3',5-triiodo-L-thyronine sulfate via IRD and of 3,3',5'-triiodo-L-thyronine sulfate via ORD. This Felis catus (Cat) protein is Type I iodothyronine deiodinase (DIO1).